Consider the following 862-residue polypeptide: MMKSNASPSESLSHHTPMMQQYLRLKAENPDILLFYRMGDFYELFYDDAKRASELLDISLTKRGASAGEPIPMAGVPFHAVEGYLAKLVQMGESVAICEQIGDPATSKGPVERKVVRIVTPGTVTDEALLSERVDNLIAAIYHHNGRFGYATMDITSGRFQLSEPQTEEEMAAELQRTSPRELLFPEDFSPVHLMASRQGNRRRPIWEFELDTAKQQLNQQFGTRDLVGFGVEQAKLGLCAAGCLIQYVKDTQRTALPHIRSLTWDRQDQSVILDAATRRNLELTHNLAGGTDNTLAEVLDHCATPMGSRMLKRWIHQPMRDNATLNQRLDAITELKETALYGELHPVLKQIGDIERILARLALRSARPRDLARLRHAMQQLPELHSVMSELKQPHLTELRTHAEPMDELCDLLERAIKENPPVVIRDGGVIADGYSAELDEWRDLANGATEFLERLEAEERDRHGIDTLKVGYNNVHGFYIQVSRGQSHLVPPHYVRRQTLKNAERYIIEELKQHEDKVLNSKSRALALEKQLWEELFDLLMPHLEQLQQLAASVAQLDVLQNLAERAENLEYCRPTLVQEAGIHIQGGRHPVVERVMNEPFIANPIELNPQRRMLIITGPNMGGKSTYMRQTALIALMAHIGSYVPAESASIGPLDRIFTRIGASDDLASGRSTFMVEMTETANILHNATRNSLVLMDEIGRGTSTYDGLSLAWASAEWLAKEIGAMTLFATHYFELTELPNVLPHLANVHLDAVEHGDGIAFMHAVQEGAASKSYGLAVAGLAGVPKPVIKNARAKLQQLELLSSQPAETRKPSRVDIANQLSLIPEPSAVEQALAGVDPDQLTPRQALDMLYQLKKLL.

Residue 621–628 participates in ATP binding; the sequence is GPNMGGKS.

It belongs to the DNA mismatch repair MutS family.

In terms of biological role, this protein is involved in the repair of mismatches in DNA. It is possible that it carries out the mismatch recognition step. This protein has a weak ATPase activity. The chain is DNA mismatch repair protein MutS from Vibrio cholerae serotype O1 (strain ATCC 39541 / Classical Ogawa 395 / O395).